We begin with the raw amino-acid sequence, 495 residues long: Putative aldehyde dehydrogenase AldA (495 aa).

Residue Gly212 to Gly218 participates in NAD(+) binding. Residues Glu256 and Cys290 contribute to the active site.

It belongs to the aldehyde dehydrogenase family.

It carries out the reaction an aldehyde + NAD(+) + H2O = a carboxylate + NADH + 2 H(+). This is Putative aldehyde dehydrogenase AldA (aldA) from Staphylococcus aureus (strain Mu50 / ATCC 700699).